The chain runs to 332 residues: MKTLGEFIVEKQHEFSHATGELTALLSAIKLGAKIIHRDINKAGLVDILGASGAENAQGEVQQKLDLFANEKLKAALKARDIVAGIASEEEDEIVVFEGCEYAKYVVLMDPLDGSSNIDVNVSVGTIFSIYRRVTPVGTPVTEEDFLQPGNKQVAAGYVVYGSSTMLVYTTGCGVHAFTYDPSLGVFCLCQERMRFPEKGKTYSINEGNYIKFPNGVKKYIKFCQEEDKSTNRPYTSRYIGSLVADFHRNLLKGGIYLYPSTASHPDGKLRLLYECNPMAFLAEQAGGKASDGKERILDIIPETLHQRRSFFVGNDHMVEDVERFIREFPDA.

Mg(2+) is bound by residues Glu-89, Asp-110, Leu-112, and Asp-113. Substrate is bound by residues 113 to 116 (DGSS), Asn-206, Tyr-239, 257 to 259 (YLY), and Lys-269. Glu-275 serves as a coordination point for Mg(2+).

This sequence belongs to the FBPase class 1 family. In terms of assembly, homotetramer. It depends on Mg(2+) as a cofactor.

The protein localises to the cytoplasm. The catalysed reaction is beta-D-fructose 1,6-bisphosphate + H2O = beta-D-fructose 6-phosphate + phosphate. It functions in the pathway carbohydrate biosynthesis; gluconeogenesis. This Shigella sonnei (strain Ss046) protein is Fructose-1,6-bisphosphatase class 1.